Consider the following 356-residue polypeptide: Glutamine synthetase PR-1 (356 aa).

The region spanning 19–99 (VIAEYIWIGG…VICDAYTPAG (81 aa)) is the GS beta-grasp domain. Residues 41-64 (PGPVKNPSELPKWNYDGSSTGQAP) form a disordered region. In terms of domain architecture, GS catalytic spans 106 to 356 (KRHNAAKIFS…IADTTILWKP (251 aa)).

Belongs to the glutamine synthetase family. In terms of assembly, homooctamer. As to expression, roots.

The protein localises to the cytoplasm. The enzyme catalyses L-glutamate + NH4(+) + ATP = L-glutamine + ADP + phosphate + H(+). The protein is Glutamine synthetase PR-1 of Phaseolus vulgaris (Kidney bean).